Reading from the N-terminus, the 476-residue chain is Cobyric acid synthase (476 aa).

In terms of domain architecture, GATase cobBQ-type spans 242 to 428 (AFRVVVPVPP…LHGLFDTPDA (187 aa)). Catalysis depends on C323, which acts as the Nucleophile. The active site involves H420.

It belongs to the CobB/CobQ family. CobQ subfamily.

It functions in the pathway cofactor biosynthesis; adenosylcobalamin biosynthesis. Functionally, catalyzes amidations at positions B, D, E, and G on adenosylcobyrinic A,C-diamide. NH(2) groups are provided by glutamine, and one molecule of ATP is hydrogenolyzed for each amidation. The protein is Cobyric acid synthase of Janthinobacterium sp. (strain Marseille) (Minibacterium massiliensis).